Consider the following 412-residue polypeptide: Alanyl-tRNA editing protein Aarsd1-A (412 aa).

Residues His-108, His-112, Cys-208, and His-212 each contribute to the Zn(2+) site.

The protein belongs to the class-II aminoacyl-tRNA synthetase family. Alax-L subfamily. Zn(2+) serves as cofactor.

It is found in the cytoplasm. In terms of biological role, functions in trans to edit the amino acid moiety from incorrectly charged tRNA(Ala). The protein is Alanyl-tRNA editing protein Aarsd1-A (aarsd1-a) of Xenopus laevis (African clawed frog).